A 181-amino-acid polypeptide reads, in one-letter code: Cell division protein SepF (181 aa).

The span at 18–27 (EDYLDDDDYD) shows a compositional bias: acidic residues. Residues 18–42 (EDYLDDDDYDDGRAVGHDDRRAMHE) are disordered. Positions 28–42 (DGRAVGHDDRRAMHE) are enriched in basic and acidic residues.

The protein belongs to the SepF family. Homodimer. Interacts with FtsZ.

The protein localises to the cytoplasm. Functionally, cell division protein that is part of the divisome complex and is recruited early to the Z-ring. Probably stimulates Z-ring formation, perhaps through the cross-linking of FtsZ protofilaments. Its function overlaps with FtsA. This Frankia alni (strain DSM 45986 / CECT 9034 / ACN14a) protein is Cell division protein SepF.